The sequence spans 401 residues: Collagen and calcium-binding EGF domain-containing protein 1 (401 aa).

A signal peptide spans 1 to 22 (MIYPGRGASLSVAVALVLFSSG). Positions 126-167 (DIDECANNNETVCSQMCVNTPGSYRCDCHSGFYLEDDGKTCT) constitute an EGF-like; calcium-binding domain. 3 disulfides stabilise this stretch: C130–C142, C138–C151, and C153–C166. N134 carries N-linked (GlcNAc...) asparagine glycosylation. Disordered regions lie at residues 229–321 (TTNS…PGSF) and 344–401 (SRPL…DWPV). Collagen-like domains are found at residues 234-276 (LPGP…PIGP) and 286-319 (GRRG…GPPG). A compositionally biased stretch (pro residues) spans 235–244 (PGPPGPPGPA). A compositionally biased stretch (low complexity) spans 246-258 (TPGAKGSSGSPGQ).

The protein belongs to the CCBE1 family. Not expressed in blood or lymphatic endothelial cells, correlating spatially and temporally with the migration routes of endothelial cells that bud from the PCV, migrate in association with somite boundaries and seed the horizontal myoseptum region from where lymphatic precursors later migrate.

The protein resides in the secreted. In terms of biological role, required for lymphangioblast budding and angiogenic sprouting from venous endothelium during embryogenesis. Required for the formation of facial lymphatic structures. Necessary for lymphangiogenesis, but is probably not part of either the vegfc-vegfr3 signaling or sox18-prox1 transcriptional pathways. The sequence is that of Collagen and calcium-binding EGF domain-containing protein 1 (ccbe1) from Danio rerio (Zebrafish).